The sequence spans 208 residues: Small ribosomal subunit protein uS4 (208 aa).

The region spanning 98-160 is the S4 RNA-binding domain; it reads CRLDNVVYRM…AKKQSRIQLA (63 aa).

Belongs to the universal ribosomal protein uS4 family. Part of the 30S ribosomal subunit. Contacts protein S5. The interaction surface between S4 and S5 is involved in control of translational fidelity.

Functionally, one of the primary rRNA binding proteins, it binds directly to 16S rRNA where it nucleates assembly of the body of the 30S subunit. Its function is as follows. With S5 and S12 plays an important role in translational accuracy. The polypeptide is Small ribosomal subunit protein uS4 (Ruthia magnifica subsp. Calyptogena magnifica).